The primary structure comprises 158 residues: MADTIQSLDQLSALKPAESEAPKHTKKVDKYGRAYATGKRKDAVARVWIKPGAGKILVNAREVDVYFARPVLRMMIQQPLVAAARAGQYDVVCTVAGGGLSGQAGAVRHGLSKALTHFEPELRGVLKKGGFLTRDSRVVERKKYGKAKARRSFQFSKR.

This sequence belongs to the universal ribosomal protein uS9 family.

The sequence is that of Small ribosomal subunit protein uS9 from Nitrobacter winogradskyi (strain ATCC 25391 / DSM 10237 / CIP 104748 / NCIMB 11846 / Nb-255).